Consider the following 709-residue polypeptide: Elongation factor G (709 aa).

Positions 8–290 (NRYRNIGISA…AVIQYMPAPQ (283 aa)) constitute a tr-type G domain. GTP contacts are provided by residues 17 to 24 (AHIDAGKT), 88 to 92 (DTPGH), and 142 to 145 (NKMD).

The protein belongs to the TRAFAC class translation factor GTPase superfamily. Classic translation factor GTPase family. EF-G/EF-2 subfamily.

The protein localises to the cytoplasm. In terms of biological role, catalyzes the GTP-dependent ribosomal translocation step during translation elongation. During this step, the ribosome changes from the pre-translocational (PRE) to the post-translocational (POST) state as the newly formed A-site-bound peptidyl-tRNA and P-site-bound deacylated tRNA move to the P and E sites, respectively. Catalyzes the coordinated movement of the two tRNA molecules, the mRNA and conformational changes in the ribosome. The chain is Elongation factor G from Psychrobacter sp. (strain PRwf-1).